A 764-amino-acid chain; its full sequence is Complement factor B (764 aa).

The first 25 residues, 1–25, serve as a signal peptide directing secretion; it reads MGSNLSPQLCLMPFILGLLSGGVTT. Sushi domains follow at residues 35–100, 101–160, and 163–220; these read GSCS…ECRA, IHCP…ICDN, and GYCS…SCQD. 6 cysteine pairs are disulfide-bonded: C37–C76, C62–C98, C103–C145, C131–C158, C165–C205, and C191–C218. N-linked (GlcNAc...) asparagine glycans are attached at residues N122 and N142. One can recognise a VWFA domain in the interval 270-469; it reads NIYLVLDGSD…NLEDVFFQMI (200 aa). Residues S278 and S280 each contribute to the Mg(2+) site. A glycan (N-linked (GlcNAc...) asparagine) is linked at N285. Residue T353 coordinates Mg(2+). An N-linked (GlcNAc...) asparagine glycan is attached at N378. Positions 477 to 757 constitute a Peptidase S1 domain; the sequence is LCGMVWEHRK…VLPWLKQKLQ (281 aa). 5 disulfides stabilise this stretch: C478-C596, C511-C527, C599-C615, C656-C682, and C695-C725. Residues H526 and D576 each act as charge relay system in the active site. The Charge relay system role is filled by S699.

This sequence belongs to the peptidase S1 family. In terms of assembly, monomer. Interacts with complement C3b; this interaction is dependent on the presence of Mg(2+). As to quaternary structure, catalytic component of the C3 convertase of the alternative complement pathway, also named C3bBb, composed of complement factor B Bb and complement C3b. Catalytic component of the C5 convertase of the alternative complement pathway, also named C3bBb3b, composed of complement factor B Bb and additional molecules of complement C3b. Interacts to CFP; this interaction contributes to the stabilization of the active C3-convertase enzyme complex. It depends on Mg(2+) as a cofactor. Mn(2+) serves as cofactor. In terms of processing, cleaved by CFD following activation of the alternative complement system, generating Ba and Bb chains. Cleavage and activation takes place when CFB is already associated with complement C3b.

Its subcellular location is the secreted. The protein localises to the cell surface. The catalysed reaction is Cleavage of Arg-|-Ser bond in complement component C3 alpha-chain to yield C3a and C3b, and Arg-|-Xaa bond in complement component C5 alpha-chain to yield C5a and C5b.. Its function is as follows. Precursor of the catalytic component of the C3 and C5 convertase complexes of the alternative pathway of the complement system, a cascade of proteins that leads to phagocytosis and breakdown of pathogens and signaling that strengthens the adaptive immune system. The alternative complement pathway acts as an amplification loop that enhances other complement pathways (classical, lectin and GZMK) by promoting formation of additional C3 and C5 convertases. CFB is cleaved and activated by CFD to generate Ba and Bb chains; Bb chain constituting the catalytic component of the C3 and C5 convertases. Functionally, serine protease component of the complement C3 and C5 convertase complexes of the alternative complement pathway. Following cleavage and activation by factor D (CFD), forms the C3 convertase together with complement C3b. As part of the C3 convertase, cleaves and activates C3 into C3a anaphylatoxin and C3b opsonin, the next components of the complement pathways. When an additional complement C3b molecule binds to the C3 convertase, forms the C5 convertase, which cleaves and activates C5 into C5a anaphylatoxin and C5b component of the membrane attack complex. In terms of biological role, involved in proliferation and differentiation of preactivated B-lymphocytes, rapid spreading of peripheral blood monocytes, stimulation of lymphocyte blastogenesis and lysis of erythrocytes. In Pongo pygmaeus (Bornean orangutan), this protein is Complement factor B (CFB).